A 309-amino-acid chain; its full sequence is THAP domain-containing protein 7 (309 aa).

The THAP-type zinc finger occupies Met-1–Phe-93. The residue at position 162 (Ser-162) is a Phosphoserine. A disordered region spans residues Ser-176–Ser-210. A compositionally biased stretch (pro residues) spans Glu-198–Ala-209. At Ser-210 the chain carries Phosphoserine. The HCFC1-binding motif (HBM) motif lies at Glu-229–Tyr-232.

Forms homodimers. Interacts with HDAC3 and nuclear hormone receptor corepressors. Interacts via HBM with HCFC1.

The protein resides in the nucleus. It is found in the chromosome. Its function is as follows. Chromatin-associated, histone tail-binding protein that represses transcription via recruitment of HDAC3 and nuclear hormone receptor corepressors. This is THAP domain-containing protein 7 (Thap7) from Mus musculus (Mouse).